The following is a 465-amino-acid chain: Poly(A) polymerase I (465 aa).

Active-site residues include D80, D82, and D162. The disordered stretch occupies residues 429–465; sequence SAPPDQKGMLNELDEEPSPRRRTRRPRKRAPRREGTA. A compositionally biased stretch (basic residues) spans 448–459; the sequence is RRRTRRPRKRAP.

The protein belongs to the tRNA nucleotidyltransferase/poly(A) polymerase family.

The enzyme catalyses RNA(n) + ATP = RNA(n)-3'-adenine ribonucleotide + diphosphate. In terms of biological role, adds poly(A) tail to the 3' end of many RNAs, which usually targets these RNAs for decay. Plays a significant role in the global control of gene expression, through influencing the rate of transcript degradation, and in the general RNA quality control. The sequence is that of Poly(A) polymerase I from Escherichia coli O157:H7.